A 235-amino-acid chain; its full sequence is Glycerol-3-phosphate acyltransferase (235 aa).

Transmembrane regions (helical) follow at residues Leu4–Gly24, Ser56–Phe76, Leu94–Gly114, Leu125–Trp145, Val152–Phe172, and Phe191–Leu211.

Belongs to the PlsY family. As to quaternary structure, probably interacts with PlsX.

Its subcellular location is the cell inner membrane. The enzyme catalyses an acyl phosphate + sn-glycerol 3-phosphate = a 1-acyl-sn-glycero-3-phosphate + phosphate. It functions in the pathway lipid metabolism; phospholipid metabolism. Functionally, catalyzes the transfer of an acyl group from acyl-phosphate (acyl-PO(4)) to glycerol-3-phosphate (G3P) to form lysophosphatidic acid (LPA). This enzyme utilizes acyl-phosphate as fatty acyl donor, but not acyl-CoA or acyl-ACP. The sequence is that of Glycerol-3-phosphate acyltransferase from Chlorobium luteolum (strain DSM 273 / BCRC 81028 / 2530) (Pelodictyon luteolum).